The sequence spans 710 residues: WD repeat-containing protein CG11141 (710 aa).

2 WD repeats span residues 31–70 and 133–172; these read FFPA…MQKL and LHKC…HLSK. The interval 283–307 is disordered; sequence LNPKQRSEPSGTHHTSASTSSTRHS. Over residues 292–307 the composition is skewed to low complexity; that stretch reads SGTHHTSASTSSTRHS. At Thr-488 the chain carries Phosphothreonine. Ser-553 carries the phosphoserine modification. 2 disordered regions span residues 612–635 and 685–710; these read ASIQ…GEPV and DPLA…FLDN. Polar residues-rich tracts occupy residues 613–624 and 694–704; these read SIQTSSRENATN and PATSDSNTSSE.

This sequence belongs to the WD repeat KIAA0329 family.

This chain is WD repeat-containing protein CG11141, found in Drosophila melanogaster (Fruit fly).